The following is a 243-amino-acid chain: Probable transcriptional regulatory protein Smlt3713 (243 aa).

This sequence belongs to the TACO1 family.

Its subcellular location is the cytoplasm. The polypeptide is Probable transcriptional regulatory protein Smlt3713 (Stenotrophomonas maltophilia (strain K279a)).